The primary structure comprises 373 residues: GPN-loop GTPase 1 (373 aa).

A2 carries the N-acetylalanine modification. Residue 29 to 34 coordinates GTP; it reads GSGKTT. The short motif at 86 to 88 is the Gly-Pro-Asn (GPN)-loop; involved in dimer interface element; the sequence is GPN. A GTP-binding site is contributed by 189 to 192; the sequence is NKTD. Phosphoserine occurs at positions 301, 312, and 314. A disordered region spans residues 304 to 373; the sequence is LDTGTATGSS…SMAQYWKKNK (70 aa). T328 is modified (phosphothreonine). A compositionally biased stretch (acidic residues) spans 330–342; the sequence is DEEDEEADSDTDD. The residue at position 338 (S338) is a Phosphoserine. T340 bears the Phosphothreonine mark. The segment covering 343–355 has biased composition (basic and acidic residues); the sequence is IDHRVTEESREEP.

It belongs to the GPN-loop GTPase family. Heterodimer with GPN3. Binds to RNA polymerase II (RNAPII). Interacts directly with RNAPII subunits RPB4 and RPB7 and the CTD of RPB1. Interacts with XPA.

Its subcellular location is the cytoplasm. The protein resides in the nucleus. Small GTPase required for proper nuclear import of RNA polymerase II (RNAPII). May act at an RNAP assembly step prior to nuclear import. Forms an interface between the RNA polymerase II enzyme and chaperone/scaffolding proteins, suggesting that it is required to connect RNA polymerase II to regulators of protein complex formation. May be involved in nuclear localization of XPA. The polypeptide is GPN-loop GTPase 1 (Bos taurus (Bovine)).